A 232-amino-acid chain; its full sequence is DNA repair protein RecO (232 aa).

It belongs to the RecO family.

In terms of biological role, involved in DNA repair and RecF pathway recombination. In Francisella tularensis subsp. novicida (strain U112), this protein is DNA repair protein RecO.